A 171-amino-acid chain; its full sequence is MWCLAITGPPGAGKSTLARKVVEELKKAGLKVCGTSCPDVREGGRRVGFLIVDVEDGSRAWLARVDCEGPRVGRYKLCPGAEEVGVRALSKDCDVYLIDEIGPMELKLPKLREAMLRVVSGNKPFVAVYHARLRDEEFLRALSRCHKIFVTKDTREEAWKEALEALSSFSP.

ATP is bound by residues 8–15 and 95–102; these read GPPGAGKS and VYLIDEIG.

This sequence belongs to the THEP1 NTPase family.

It carries out the reaction a ribonucleoside 5'-triphosphate + H2O = a ribonucleoside 5'-diphosphate + phosphate + H(+). Has nucleotide phosphatase activity towards ATP, GTP, CTP, TTP and UTP. May hydrolyze nucleoside diphosphates with lower efficiency. In Ignicoccus hospitalis (strain KIN4/I / DSM 18386 / JCM 14125), this protein is Nucleoside-triphosphatase THEP1.